Reading from the N-terminus, the 277-residue chain is Putative thiosulfate sulfurtransferase mpst-4 (277 aa).

Rhodanese domains are found at residues 15–153 (NFGN…VVQS) and 155–243 (SKAE…QHLN). C204 (cysteine persulfide intermediate) is an active-site residue.

The catalysed reaction is thiosulfate + hydrogen cyanide = thiocyanate + sulfite + 2 H(+). This is Putative thiosulfate sulfurtransferase mpst-4 from Caenorhabditis elegans.